A 283-amino-acid chain; its full sequence is Nucleotide-binding protein Hore_15880 (283 aa).

Gly-8–Ser-15 contacts ATP. Position 57-60 (Asp-57–Gly-60) interacts with GTP.

The protein belongs to the RapZ-like family.

Functionally, displays ATPase and GTPase activities. This Halothermothrix orenii (strain H 168 / OCM 544 / DSM 9562) protein is Nucleotide-binding protein Hore_15880.